The following is a 715-amino-acid chain: Polyribonucleotide nucleotidyltransferase (715 aa).

2 residues coordinate Mg(2+): Asp488 and Asp494. In terms of domain architecture, KH spans 555 to 614; it reads PKIETIKIPVDKIREVIGSGGKVIREIVEKTGAKIDIGEDGTIKIAAAEQTKIDAAKEWI. The S1 motif domain occupies 624-692; it reads GQIYTGKVVK…DRGKTRLSMK (69 aa). Positions 692 to 715 are disordered; the sequence is KVVDQETGEDLSKSNEKAEEPADA. Residues 701–715 are compositionally biased toward basic and acidic residues; the sequence is DLSKSNEKAEEPADA.

The protein belongs to the polyribonucleotide nucleotidyltransferase family. Mg(2+) is required as a cofactor.

Its subcellular location is the cytoplasm. It catalyses the reaction RNA(n+1) + phosphate = RNA(n) + a ribonucleoside 5'-diphosphate. In terms of biological role, involved in mRNA degradation. Catalyzes the phosphorolysis of single-stranded polyribonucleotides processively in the 3'- to 5'-direction. In Phenylobacterium zucineum (strain HLK1), this protein is Polyribonucleotide nucleotidyltransferase.